The following is a 507-amino-acid chain: Maturase K (507 aa).

It belongs to the intron maturase 2 family. MatK subfamily.

It is found in the plastid. The protein resides in the chloroplast. Its function is as follows. Usually encoded in the trnK tRNA gene intron. Probably assists in splicing its own and other chloroplast group II introns. The protein is Maturase K of Cryptomeria japonica (Japanese cedar).